A 435-amino-acid polypeptide reads, in one-letter code: GTPase Der (435 aa).

2 consecutive EngA-type G domains span residues 4 to 167 (PVVA…PEKD) and 175 to 350 (IRFS…DNHN). GTP is bound by residues 10–17 (GRPNVGKS), 57–61 (DTGGI), 119–122 (NKAD), 181–188 (GRPNVGKS), 228–232 (DTAGI), and 293–296 (NKWD). Residues 351–435 (KRVQSATLND…PIHLIERARK (85 aa)) enclose the KH-like domain.

Belongs to the TRAFAC class TrmE-Era-EngA-EngB-Septin-like GTPase superfamily. EngA (Der) GTPase family. As to quaternary structure, associates with the 50S ribosomal subunit.

Functionally, GTPase that plays an essential role in the late steps of ribosome biogenesis. The polypeptide is GTPase Der (Levilactobacillus brevis (strain ATCC 367 / BCRC 12310 / CIP 105137 / JCM 1170 / LMG 11437 / NCIMB 947 / NCTC 947) (Lactobacillus brevis)).